A 111-amino-acid polypeptide reads, in one-letter code: Resistin-like gamma (111 aa).

The first 23 residues, 1–23 (MKTAICSLLICIFLLQLMVPVNT), serve as a signal peptide directing secretion. 5 cysteine pairs are disulfide-bonded: Cys-55/Cys-108, Cys-67/Cys-107, Cys-76/Cys-93, Cys-78/Cys-95, and Cys-82/Cys-97.

Belongs to the resistin/FIZZ family. In terms of assembly, homodimer. Heterodimer with RETNLB. As to expression, highly expressed in bone marrow, spleen and white blood cells. Also detected at low levels in thymus, lung, trachea, white adipose tissue, nasal respiratory epithelium, colon, small intestine, kidney, liver, and heart.

Its subcellular location is the secreted. Functionally, probable hormone. Promotes chemotaxis in myeloid cells. This is Resistin-like gamma from Rattus norvegicus (Rat).